We begin with the raw amino-acid sequence, 407 residues long: Aminomethyltransferase, mitochondrial (407 aa).

A mitochondrion-targeting transit peptide spans 1–29; sequence MRGGLWQLGQSITRRLGQSDKKTIARRCY. Residues glutamate 234, arginine 265, and tyrosine 403 each coordinate substrate.

Belongs to the GcvT family. As to quaternary structure, the glycine cleavage system is composed of four proteins: P, T, L and H.

Its subcellular location is the mitochondrion. It carries out the reaction N(6)-[(R)-S(8)-aminomethyldihydrolipoyl]-L-lysyl-[protein] + (6S)-5,6,7,8-tetrahydrofolate = N(6)-[(R)-dihydrolipoyl]-L-lysyl-[protein] + (6R)-5,10-methylene-5,6,7,8-tetrahydrofolate + NH4(+). In terms of biological role, the glycine cleavage system catalyzes the degradation of glycine. This chain is Aminomethyltransferase, mitochondrial (GDCST), found in Flaveria pringlei.